The following is a 382-amino-acid chain: MGIKGLSQVIADHAPSAIKVQEIKAFFGRKVAIDASMCLYQFLIAIRQDGSQMQSEDGETTSHLMGMFYRTIRMIDNGIKPVYVFDGKPPDMKSGELEKRTERRAEAEKALTEAKEKGDAKEAEKFERRLVKVTKQQNEEVKQLLGLMGIPVVEAPCEAEAQCANLVKAGKVYGTATEDMDALTFGSCVLLRHLLAPEAKKIPIKEFHLARVLEEMQLTKDQFIDLCILLGCDYCGTIRGIGPKKAVELIKQHKNIETVLENIDQTKYPPPADWPYKRARELFHEPEVMKCDEVELTWKDPDVEGIVKFMCGEKNFSEDRIRSAMVRMQKSRNAGTQGRIDSFFTVSSQVKCVTVAKRKAQEEAEKMKKGGKKSGPPKKKAK.

The segment at M1–R104 is N-domain. D34 provides a ligand contact to Mg(2+). Positions 47 and 70 each coordinate DNA. Mg(2+) is bound by residues D86, E158, E160, D179, and D181. Residues E122–H253 are I-domain. E158 lines the DNA pocket. The DNA site is built by G231 and D233. Residue D233 coordinates Mg(2+). The interval T336 to F344 is interaction with PCNA. Positions K359–K368 are enriched in basic and acidic residues. Residues K359 to K382 form a disordered region. Over residues K369–K382 the composition is skewed to basic residues.

It belongs to the XPG/RAD2 endonuclease family. FEN1 subfamily. Interacts with PCNA. Three molecules of crn-1 bind to one PCNA trimer with each molecule binding to one PCNA monomer. PCNA stimulates the nuclease activity without altering cleavage specificity. Mg(2+) is required as a cofactor. Phosphorylated. Phosphorylation upon DNA damage induces relocalization to the nuclear plasma.

It localises to the nucleus. Its subcellular location is the nucleolus. The protein resides in the nucleoplasm. It is found in the mitochondrion. In terms of biological role, structure-specific nuclease with 5'-flap endonuclease and 5'-3' exonuclease activities involved in DNA replication and repair. During DNA replication, cleaves the 5'-overhanging flap structure that is generated by displacement synthesis when DNA polymerase encounters the 5'-end of a downstream Okazaki fragment. It enters the flap from the 5'-end and then tracks to cleave the flap base, leaving a nick for ligation. Also involved in the long patch base excision repair (LP-BER) pathway, by cleaving within the apurinic/apyrimidinic (AP) site-terminated flap. Acts as a genome stabilization factor that prevents flaps from equilibrating into structures that lead to duplications and deletions. Also possesses 5'-3' exonuclease activity on nicked or gapped double-stranded DNA, and exhibits RNase H activity. Also involved in replication and repair of rDNA and in repairing mitochondrial DNA. This chain is Flap endonuclease 1, found in Caenorhabditis briggsae.